Consider the following 351-residue polypeptide: Methylthioribose-1-phosphate isomerase (351 aa).

Asp-244 functions as the Proton donor in the catalytic mechanism.

This sequence belongs to the eIF-2B alpha/beta/delta subunits family. MtnA subfamily.

It localises to the cytoplasm. The protein localises to the nucleus. It carries out the reaction 5-(methylsulfanyl)-alpha-D-ribose 1-phosphate = 5-(methylsulfanyl)-D-ribulose 1-phosphate. It functions in the pathway amino-acid biosynthesis; L-methionine biosynthesis via salvage pathway; L-methionine from S-methyl-5-thio-alpha-D-ribose 1-phosphate: step 1/6. In terms of biological role, catalyzes the interconversion of methylthioribose-1-phosphate (MTR-1-P) into methylthioribulose-1-phosphate (MTRu-1-P). The polypeptide is Methylthioribose-1-phosphate isomerase (Anopheles gambiae (African malaria mosquito)).